The primary structure comprises 492 residues: Glutamyl-tRNA(Gln) amidotransferase subunit A (492 aa).

Residues K78 and S158 each act as charge relay system in the active site. Residue S182 is the Acyl-ester intermediate of the active site.

It belongs to the amidase family. GatA subfamily. In terms of assembly, heterotrimer of A, B and C subunits.

The enzyme catalyses L-glutamyl-tRNA(Gln) + L-glutamine + ATP + H2O = L-glutaminyl-tRNA(Gln) + L-glutamate + ADP + phosphate + H(+). Its function is as follows. Allows the formation of correctly charged Gln-tRNA(Gln) through the transamidation of misacylated Glu-tRNA(Gln) in organisms which lack glutaminyl-tRNA synthetase. The reaction takes place in the presence of glutamine and ATP through an activated gamma-phospho-Glu-tRNA(Gln). This is Glutamyl-tRNA(Gln) amidotransferase subunit A from Rhodopseudomonas palustris (strain HaA2).